Reading from the N-terminus, the 270-residue chain is tRNA pseudouridine synthase A (270 aa).

Aspartate 60 acts as the Nucleophile in catalysis. The tract at residues 107–111 (FHARF) is RNA binding. Residue tyrosine 118 coordinates substrate. Residues 168-172 (QCQSR) are interaction with tRNA.

The protein belongs to the tRNA pseudouridine synthase TruA family. In terms of assembly, homodimer.

It catalyses the reaction uridine(38/39/40) in tRNA = pseudouridine(38/39/40) in tRNA. Functionally, formation of pseudouridine at positions 38, 39 and 40 in the anticodon stem and loop of transfer RNAs. The protein is tRNA pseudouridine synthase A of Klebsiella pneumoniae (strain 342).